Here is a 117-residue protein sequence, read N- to C-terminus: Putative membrane protein insertion efficiency factor (117 aa).

It belongs to the UPF0161 family.

Its subcellular location is the cell inner membrane. In terms of biological role, could be involved in insertion of integral membrane proteins into the membrane. The protein is Putative membrane protein insertion efficiency factor of Nitrobacter winogradskyi (strain ATCC 25391 / DSM 10237 / CIP 104748 / NCIMB 11846 / Nb-255).